Reading from the N-terminus, the 555-residue chain is Neurofilament light polypeptide (555 aa).

Serine 2 is subject to N-acetylserine. Residues 2–93 (SSFSYEPYYS…KSIRTQEKAQ (92 aa)) form a head region. Position 23 is an asymmetric dimethylarginine; alternate (arginine 23). Arginine 23 is modified (omega-N-methylarginine; alternate). Arginine 30 is modified (omega-N-methylarginine). Tyrosine 43 is modified (phosphotyrosine). A phosphoserine mark is found at serine 56, serine 67, and serine 103. The 312-residue stretch at 90–401 (EKAQLQDLND…KLLEGEETRL (312 aa)) folds into the IF rod domain. The interval 94-125 (LQDLNDRFASFIERVHELEQQNKVLEAELLVL) is coil 1A. Residues 126 to 138 (RQKHSEPSRFRAL) are linker 1. Residues 139 to 234 (YEQEIRDLRL…KVHEEEIAEL (96 aa)) form a coil 1B region. The linker 12 stretch occupies residues 235–253 (QAQIQYAQISVEMDVSSKP). The coil 2A stretch occupies residues 254–272 (DLSAALKDIRAQYEKLAAK). The linker 2 stretch occupies residues 273 to 281 (NMQNAEEWF). Residues 282-397 (KSRFTVLTES…AAYRKLLEGE (116 aa)) form a coil 2B region. A tail, subdomain A region spans residues 398-444 (ETRLSFTSVGSLTTGYTQSSQVFGRSAYGGLQTSSYLMSARSFPSYY). The tail stretch occupies residues 398–555 (ETRLSFTSVG…GEEQATKKKD (158 aa)). Residues 445–555 (TSHVQEEQIE…GEEQATKKKD (111 aa)) are tail, subdomain B (acidic). The disordered stretch occupies residues 463–555 (KAEEAKDEPP…GEEQATKKKD (93 aa)). Positions 472–540 (PSEGEAEEEE…ETKEAEEEEK (69 aa)) are enriched in acidic residues. Position 473 is a phosphoserine (serine 473). Threonine 532 is subject to Phosphothreonine. The span at 541–555 (KDEGAGEEQATKKKD) shows a compositional bias: basic and acidic residues.

It belongs to the intermediate filament family. As to quaternary structure, forms homodimers (in vitro). Forms heterodimers with NEFH or NEFM; which can further hetero-oligomerize (in vitro). Forms heterodimers with INA (in vitro). Interacts with ARHGEF28. Interacts with TRIM2. Post-translationally, O-glycosylated. In terms of processing, phosphorylated in the head and rod regions by the PKC kinase PKN1, leading to the inhibition of polymerization. Ubiquitinated in the presence of TRIM2 and UBE2D1.

It is found in the cell projection. The protein localises to the axon. Its subcellular location is the cytoplasm. It localises to the cytoskeleton. In terms of biological role, neurofilaments usually contain three intermediate filament proteins: NEFL, NEFM, and NEFH which are involved in the maintenance of neuronal caliber. May additionally cooperate with the neuronal intermediate filament proteins PRPH and INA to form neuronal filamentous networks. This chain is Neurofilament light polypeptide (NEFL), found in Bos taurus (Bovine).